The primary structure comprises 534 residues: Cytochrome P450 monooxygenase vrtK (534 aa).

A heme-binding site is contributed by cysteine 448.

This sequence belongs to the cytochrome P450 family. Requires heme as cofactor.

The protein operates within secondary metabolite biosynthesis; terpenoid biosynthesis. Its function is as follows. Cytochrome P450 monooxygenase; part of the gene cluster that mediates the biosynthesis of viridicatumtoxin, a tetracycline-like fungal meroterpenoid with a unique, fused spirobicyclic ring system. The first step of the pathway is the production of the malonamoyl-CoA starter unit for the polyketide synthase vrtA. The aldolase vrtJ may be involved in the synthesis of the malonamate substrate for malonamoyl-CoA synthetase vrtB. The polyketide synthase vrtA then may utilize the malonamoyl-CoA starter unit, followed by sequential condensation of eight malonyl-CoA units to form the polyketide backbone. The cyclization of the last ring could be mediated by the lactamase-like protein vrtG. The proposed post-PKS tailoring steps are a hydroxylation at C5 catalyzed the cytochrome P450 monooxygenase vrtE, a hydroxylation at C12a catalyzed by VrtH and/or VrtI, and an O-methylation by the O-methyltransferase vrtF. VrtC is then proposed to catalyze the transfer of a geranyl group synthesized by vrtD to the aromatic C ring of the tetracyclic polyketide intermediate of viridicatumtoxin to yield previridicatumtoxin. Finally, the cytochrome P450 monooxygenase vrtK catalyzes the spirocyclization of the geranyl moiety of previridicatumtoxin to afford viridicatumtoxin. This chain is Cytochrome P450 monooxygenase vrtK, found in Penicillium aethiopicum.